The following is a 619-amino-acid chain: MPQYRSRTTTYGRNMAGARALWRATGMKDEDFEKPIIAVANSFTQFVPGHVHLKDLGQLVAREIERAGGVAKEFNTIAVDDGIAMGHGGMLYSLPSRDLIADSVEYMVNAHCADALVCISNCDKITPGMLMAALRLNIPAVFVSGGPMEAGKVILNGEERHLDLVDAMVVAADDRESDEDVATIERSACPTCGSCSGMFTANSMNCLTEALGLSLPGNGSLLATHGDRKELFLEAGRLAVKLAKQYYEQDDESVLPRSIASFKAFENAICLDIAMGGSTNTVLHLLAAAHEAGVDFTMKDIDRLSRKIPNLCKVAPSTQKYHMEDVHRAGGVIAILGELDRAGLLHREVPTVHSPSLGAALDQWDINRETATEEAKSRYLAAPGGVPTQEAFSQSKRWTALDLDRENGCIRDIEHAYSQDGGLAVLYGNLAEQGCIVKTAGVDENILVFSGPAVVCESQDEAVNWILNGRVKEGDVVLIRYEGPRGGPGMQEMLYPTSYLKSKGLGKACALITDGRFSGGTSGLSIGHVSPEAAEGGLIALVEQGDRIEIDIPNRRIHLAVSEEELAHRRAAMEARGDQAWTPKDRDRPISQALQAYAAMTTSAARGGVRDLSQILGSR.

A Mg(2+)-binding site is contributed by D81. C122 is a [2Fe-2S] cluster binding site. Residues D123 and K124 each coordinate Mg(2+). At K124 the chain carries N6-carboxylysine. C195 contacts [2Fe-2S] cluster. E492 is a Mg(2+) binding site. The Proton acceptor role is filled by S518.

This sequence belongs to the IlvD/Edd family. As to quaternary structure, homodimer. The cofactor is [2Fe-2S] cluster. It depends on Mg(2+) as a cofactor.

It carries out the reaction (2R)-2,3-dihydroxy-3-methylbutanoate = 3-methyl-2-oxobutanoate + H2O. The catalysed reaction is (2R,3R)-2,3-dihydroxy-3-methylpentanoate = (S)-3-methyl-2-oxopentanoate + H2O. The protein operates within amino-acid biosynthesis; L-isoleucine biosynthesis; L-isoleucine from 2-oxobutanoate: step 3/4. Its pathway is amino-acid biosynthesis; L-valine biosynthesis; L-valine from pyruvate: step 3/4. Its function is as follows. Functions in the biosynthesis of branched-chain amino acids. Catalyzes the dehydration of (2R,3R)-2,3-dihydroxy-3-methylpentanoate (2,3-dihydroxy-3-methylvalerate) into 2-oxo-3-methylpentanoate (2-oxo-3-methylvalerate) and of (2R)-2,3-dihydroxy-3-methylbutanoate (2,3-dihydroxyisovalerate) into 2-oxo-3-methylbutanoate (2-oxoisovalerate), the penultimate precursor to L-isoleucine and L-valine, respectively. The protein is Dihydroxy-acid dehydratase of Synechococcus elongatus (strain ATCC 33912 / PCC 7942 / FACHB-805) (Anacystis nidulans R2).